Reading from the N-terminus, the 199-residue chain is Probable GTP-binding protein EngB (199 aa).

One can recognise an EngB-type G domain in the interval 22 to 196 (NFSEVAFLGR…EDVIINQTLG (175 aa)). GTP is bound by residues 30–37 (GRSNVGKS), 57–61 (GKTQL), 82–85 (DLPG), 152–155 (TKCD), and 175–177 (VSN). Positions 37 and 59 each coordinate Mg(2+).

This sequence belongs to the TRAFAC class TrmE-Era-EngA-EngB-Septin-like GTPase superfamily. EngB GTPase family. Mg(2+) serves as cofactor.

Necessary for normal cell division and for the maintenance of normal septation. The sequence is that of Probable GTP-binding protein EngB from Campylobacter jejuni subsp. doylei (strain ATCC BAA-1458 / RM4099 / 269.97).